The primary structure comprises 97 residues: Signal recognition particle 19 kDa protein (97 aa).

It belongs to the SRP19 family. As to quaternary structure, part of the signal recognition particle protein translocation system, which is composed of SRP and FtsY. Archaeal SRP consists of a 7S RNA molecule of 300 nucleotides and two protein subunits: SRP54 and SRP19.

Its subcellular location is the cytoplasm. In terms of biological role, involved in targeting and insertion of nascent membrane proteins into the cytoplasmic membrane. Binds directly to 7S RNA and mediates binding of the 54 kDa subunit of the SRP. This chain is Signal recognition particle 19 kDa protein, found in Pyrobaculum calidifontis (strain DSM 21063 / JCM 11548 / VA1).